Reading from the N-terminus, the 541-residue chain is Arginine--tRNA ligase (541 aa).

A 'HIGH' region motif is present at residues 123–133; that stretch reads ANPTGFLHIGH.

This sequence belongs to the class-I aminoacyl-tRNA synthetase family. As to quaternary structure, monomer.

It localises to the cytoplasm. It carries out the reaction tRNA(Arg) + L-arginine + ATP = L-arginyl-tRNA(Arg) + AMP + diphosphate. The sequence is that of Arginine--tRNA ligase from Metamycoplasma arthritidis (strain 158L3-1) (Mycoplasma arthritidis).